The primary structure comprises 194 residues: Cytochrome b-245 light chain (194 aa).

The Cytoplasmic segment spans residues 2 to 7 (GQIEWA). Residues 8 to 30 (MWANEQALASGLILVAGGIVATA) form a helical membrane-spanning segment. Over 31–35 (GRFTQ) the chain is Extracellular. Residues 36–53 (WYFGTYAIAAGVLVCLLE) form a helical membrane-spanning segment. The Cytoplasmic portion of the chain corresponds to 54–69 (YPRGSRAKGSTLERCG). Residues 70–80 (QRYLTAVLKLL) lie within the membrane without spanning it. Over 81-86 (GPLSRN) the chain is Cytoplasmic. A helical transmembrane segment spans residues 87 to 104 (YYFRAALHLALSVPAGFL). Leu105 is a topological domain (extracellular). Residues 106–126 (ATILGTVCLVIASIIYLLAAV) form a helical membrane-spanning segment. Residues 127-194 (RGEQWTPIEP…NPIPVTDEVV (68 aa)) lie on the Cytoplasmic side of the membrane. Residues 134–194 (IEPRPKERPQ…NPIPVTDEVV (61 aa)) are disordered. Thr147 carries the phosphothreonine modification. Lys149 participates in a covalent cross-link: Glycyl lysine isopeptide (Lys-Gly) (interchain with G-Cter in ubiquitin).

Belongs to the p22phox family. Component of the phagocyte NADPH oxidase core complex/cytochrome b558 complex, composed of CYBB (heavy chain (beta)) and CYBA (light chain (alpha)). Component of the phagocyte NADPH oxidase complex composed of an obligatory core heterodimer formed by the membrane proteins CYBA and CYBB and the cytosolic regulatory subunits NCF1/p47-phox, NCF2/p67-phox, NCF4/p40-phox and the small GTPase RAC1 or RAC2. Interacts with NCF1 (via SH3 domain). Interacts with SH3PXD2A. Interacts with DUOX1, DUOX2 and TPO. Interacts with NOX4; this interaction mediates superoxide generation. Interacts with calprotectin (S100A8/9). Interacts with GBP7. Interacts with NOXO1. Forms a heterodimer with NOX3 and is essential for activity and cell membrane localization of NOX3. Interacts with NOX1. Phosphorylation at Thr-147 enhances NADPH oxidase activity by promoting NCF1/p47-phox binding. Post-translationally, ubiquitinated at Lys-149 likely by RNF145.

It localises to the cell membrane. Functionally, subunit of NADPH oxidase complexes that is required for the NADPH oxidase activity that generates, in various cell types, superoxide from molecular oxygen utilizing NADPH as an electron donor. Subunit of the phagocyte NADPH oxidase complex that mediates the transfer of electrons from cytosolic NADPH to O2 to produce the superoxide anion (O2(-)). In the activated complex, electrons are first transferred from NADPH to flavin adenine dinucleotide (FAD) and subsequently transferred via two heme molecules to molecular oxygen, producing superoxide through an outer-sphere reaction. Activation of the NADPH oxidase complex is initiated by the assembly of cytosolic subunits of the NADPH oxidase complex with the core NADPH oxidase complex to form a complex at the plasma membrane or phagosomal membrane. This activation process is initiated by phosphorylation dependent binding of the cytosolic NCF1/p47-phox subunit to the C-terminus of CYBA/p22-phox. Aassociates with NOX3 to form a functional NADPH oxidase constitutively generating superoxide. The polypeptide is Cytochrome b-245 light chain (Oryctolagus cuniculus (Rabbit)).